Consider the following 446-residue polypeptide: ATP synthase subunit b-delta (446 aa).

The interval 1-168 (MSTFIGQLFG…PATADVDYPL (168 aa)) is ATP synthase subunit b. A helical membrane pass occupies residues 4-24 (FIGQLFGFAVIVYLVWRFIVP). Residues 169–446 (LAKMRSASRR…LAAAEARLPD (278 aa)) form an ATP synthase subunit delta region.

The protein in the N-terminal section; belongs to the ATPase B chain family. It in the C-terminal section; belongs to the ATPase delta chain family. As to quaternary structure, F-type ATPases have 2 components, F(1) - the catalytic core - and F(0) - the membrane proton channel. F(1) has five subunits: alpha(3), beta(3), gamma(1), delta(1), epsilon(1). F(0) has three main subunits: a(1), b(2) and c(10-14). The alpha and beta chains form an alternating ring which encloses part of the gamma chain. F(1) is attached to F(0) by a central stalk formed by the gamma and epsilon chains, while a peripheral stalk is formed by the delta and b chains.

The protein resides in the cell membrane. Functionally, f(1)F(0) ATP synthase produces ATP from ADP in the presence of a proton or sodium gradient. F-type ATPases consist of two structural domains, F(1) containing the extramembraneous catalytic core and F(0) containing the membrane proton channel, linked together by a central stalk and a peripheral stalk. During catalysis, ATP synthesis in the catalytic domain of F(1) is coupled via a rotary mechanism of the central stalk subunits to proton translocation. Its function is as follows. This fusion protein includes a component of the F(0) channel (subunit b) and of the F(1) subunit (subunit delta). Two copies of subunit b and one of delta together form the peripheral 'stator' stalk which links F(1) to F(0). The polypeptide is ATP synthase subunit b-delta (atpFH) (Mycobacterium tuberculosis (strain CDC 1551 / Oshkosh)).